The chain runs to 837 residues: V-type proton ATPase 116 kDa subunit a 1 (837 aa).

The Cytoplasmic segment spans residues 1 to 388 (MGELFRSEEM…DAYGIGTYRE (388 aa)). Phosphothreonine is present on residues threonine 250 and threonine 360. A Phosphotyrosine modification is found at tyrosine 364. A helical transmembrane segment spans residues 389–407 (INPAPYTIITFPFLFAVMF). At 408–409 (GD) the chain is on the vacuolar side. Residues 410 to 426 (FGHGILMTLFAVWMVLR) traverse the membrane as a helical segment. Topologically, residues 427 to 441 (ESRILSQKNENEMFS) are cytoplasmic. Residues 442 to 471 (TVFSGRYIILLMGVFSMYTGLIYNDCFSKS) form a helical membrane-spanning segment. Topologically, residues 472 to 534 (LNIFGSSWSV…ATNKLTFLNS (63 aa)) are vacuolar. The chain crosses the membrane as a helical span at residues 535–554 (FKMKMSVILGIIHMLFGVSL). Residues 555-572 (SLFNHIYFKKPLNIYFGF) lie on the Cytoplasmic side of the membrane. A helical transmembrane segment spans residues 573-593 (IPEIIFMTSLFGYLVILIFYK). Topologically, residues 594-638 (WTAYDAHTSENAPSLLIHFINMFLFSYPESGYSMLYSGQKGIQCF) are vacuolar. The helical transmembrane segment at 639–658 (LVVVALLCVPWMLLFKPLVL) threads the bilayer. The Cytoplasmic segment spans residues 659–724 (RRQYLRRKHL…ATMVHQAIHT (66 aa)). Residues 725-749 (IEYCLGCISNTASYLRLWALSLAHA) traverse the membrane as a helical segment. At 750–770 (QLSEVLWTMVIHIGLSVKSLA) the chain is on the vacuolar side. The chain crosses the membrane as a helical span at residues 771–809 (GGLVLFFFFTAFATLTVAILLIMEGLSAFLHALRLHWVE). Residues 810–837 (FQNKFYSGTGFKFLPFSFEHIREGKFGE) lie on the Cytoplasmic side of the membrane.

This sequence belongs to the V-ATPase 116 kDa subunit family. As to quaternary structure, V-ATPase is a heteromultimeric enzyme made up of two complexes: the ATP-hydrolytic V1 complex and the proton translocation V0 complex. The V1 complex consists of three catalytic AB heterodimers that form a heterohexamer, three peripheral stalks each consisting of EG heterodimers, one central rotor including subunits D and F, and the regulatory subunits C and H. The proton translocation complex V0 consists of the proton transport subunit a, a ring of proteolipid subunits c9c'', rotary subunit d, subunits e and f, and the accessory subunits ATP6AP1/Ac45 and ATP6AP2/PRR. Interacts with SPAAR.

The protein localises to the cytoplasmic vesicle. Its subcellular location is the clathrin-coated vesicle membrane. It localises to the secretory vesicle. The protein resides in the synaptic vesicle membrane. It is found in the melanosome. In terms of biological role, subunit of the V0 complex of vacuolar(H+)-ATPase (V-ATPase), a multisubunit enzyme composed of a peripheral complex (V1) that hydrolyzes ATP and a membrane integral complex (V0) that translocates protons. V-ATPase is responsible for the acidification of various organelles, such as lysosomes, endosomes, the trans-Golgi network, and secretory granules, including synaptic vesicles. In certain cell types, can be exported to the plasma membrane, where it is involved in the acidification of the extracellular environment. Required for assembly and activity of the vacuolar ATPase. Through its action on compartment acidification, plays an essential role in neuronal development in terms of integrity and connectivity of neurons. In Pongo abelii (Sumatran orangutan), this protein is V-type proton ATPase 116 kDa subunit a 1 (ATP6V0A1).